We begin with the raw amino-acid sequence, 180 residues long: Fanconi anemia core complex-associated protein 20 (180 aa).

Residues 1-17 (MEAARRPRLGLSRRRPR) show a composition bias toward basic residues. Disordered regions lie at residues 1-28 (MEAA…GRPW) and 106-135 (GAGG…VEQQ). Serine 113 and serine 137 each carry phosphoserine. The UBZ2-type zinc-finger motif lies at 144–180 (LRSCPMCQKEFAPRLTQLDVDSHLAQCLAESTEDVTW). Zn(2+) is bound by residues cysteine 147, cysteine 150, histidine 166, and cysteine 170.

In terms of assembly, component of the Fanconi anemia (FA) complex. Interacts with FANCA; interaction is direct. Interacts with REV1. Reported to bind monoubiquitinated REV1; however it binds better to non-ubiquitinated REV1.

It is found in the nucleus. It localises to the chromosome. Component of the Fanconi anemia (FA) complex required to recruit the FA complex to DNA interstrand cross-links (ICLs) and promote ICLs repair. Following DNA damage recognizes and binds 'Lys-63'-linked ubiquitin generated by RNF8 at ICLs and recruits other components of the FA complex. Promotes translesion synthesis via interaction with REV1. This Homo sapiens (Human) protein is Fanconi anemia core complex-associated protein 20.